The sequence spans 332 residues: 2,3-diketo-L-gulonate reductase (332 aa).

Histidine 44 serves as the catalytic Proton donor. NAD(+)-binding positions include 168-174, 224-225, and 304-306; these read ITMVDMS, WK, and GHE.

Belongs to the LDH2/MDH2 oxidoreductase family. DlgD subfamily. Homodimer.

The protein localises to the cytoplasm. The enzyme catalyses 3-dehydro-L-gulonate + NAD(+) = 2,3-dioxo-L-gulonate + NADH + H(+). It catalyses the reaction 3-dehydro-L-gulonate + NADP(+) = 2,3-dioxo-L-gulonate + NADPH + H(+). Catalyzes the reduction of 2,3-diketo-L-gulonate in the presence of NADH, to form 3-keto-L-gulonate. This is 2,3-diketo-L-gulonate reductase from Mannheimia succiniciproducens (strain KCTC 0769BP / MBEL55E).